Here is a 62-residue protein sequence, read N- to C-terminus: Pelophylaxin-4 (62 aa).

A signal peptide spans 1–22 (MLTLKKSMLLIFFLGTINFSLC). Residues 23–45 (EQERNADEEERRDEPEERDVEVQ) constitute a propeptide that is removed on maturation. Position 60 is a leucine amide (leucine 60). Residue glycine 61 is a propeptide.

Expressed by the skin glands.

Its subcellular location is the secreted. Functionally, antimicrobial peptide. The protein is Pelophylaxin-4 of Pelophylax fukienensis (Fukien gold-striped pond frog).